A 21-amino-acid polypeptide reads, in one-letter code: Major outer membrane protein (21 aa).

In terms of assembly, disulfide bond interactions within and between MOMP molecules and other components form high molecular-weight oligomers.

It is found in the cell outer membrane. Functionally, structural rigidity of the outer membrane of elementary bodies and porin forming, permitting diffusion of solutes through the intracellular reticulate body membrane. This Actinobacillus suis protein is Major outer membrane protein.